The chain runs to 407 residues: Substance-P receptor (407 aa).

At 1 to 31 (MDNVLPVDSDLSPNISTNTSEPNQFVQPAWQ) the chain is on the extracellular side. N-linked (GlcNAc...) asparagine glycans are attached at residues asparagine 14 and asparagine 18. A helical transmembrane segment spans residues 32-54 (IVLWAAAYTVIVVTSVVGNVVVM). Residues 55–64 (WIILAHKRMR) are Cytoplasmic-facing. Residues 65-86 (TVTNYFLVNLAFAEASMAAFNT) form a helical membrane-spanning segment. Residues 87–106 (VVNFTYAVHNEWYYGLFYCK) are Extracellular-facing. Cysteine 105 and cysteine 180 are oxidised to a cystine. The chain crosses the membrane as a helical span at residues 107 to 128 (FHNFFPIAAVFASIYSMTAVAF). Residues 129–148 (DRYMAIIHPLQPRLSATATK) are Cytoplasmic-facing. A helical transmembrane segment spans residues 149–169 (VVICVIWVLALLLAFPQGYYS). Residues 170-194 (TTETMPSRVVCMIEWPEHPNKIYEK) are Extracellular-facing. A helical transmembrane segment spans residues 195-219 (VYHICVTVLIYFLPLLVIGYAYTVV). Histidine 197 lines the CP-96345 pocket. Over 220–248 (GITLWASEIPGDSSDRYHEQVSAKRKVVK) the chain is Cytoplasmic. A helical transmembrane segment spans residues 249–270 (MMIVVVCTFAICWLPFHIFFLL). Residues 271-283 (PYINPDLYLKKFI) are Extracellular-facing. A helical membrane pass occupies residues 284-308 (QQVYLAIMWLAMSSTMYNPIIYCCL). Over 309–407 (NDRFRLGFKH…SFSFSSNVLS (99 aa)) the chain is Cytoplasmic. The S-palmitoyl cysteine moiety is linked to residue cysteine 322. A disordered region spans residues 364-407 (AHEEEPEDGPKATPSSLDLTSNCSSRSDSKTMTESFSFSSNVLS). A compositionally biased stretch (polar residues) spans 376-407 (TPSSLDLTSNCSSRSDSKTMTESFSFSSNVLS).

It belongs to the G-protein coupled receptor 1 family. Interacts with ARRB1.

The protein localises to the cell membrane. Functionally, this is a receptor for the tachykinin neuropeptide substance P. It is probably associated with G proteins that activate a phosphatidylinositol-calcium second messenger system. The rank order of affinity of this receptor to tachykinins is: substance P &gt; substance K &gt; neuromedin-K. This Homo sapiens (Human) protein is Substance-P receptor (TACR1).